Reading from the N-terminus, the 238-residue chain is MWRTTVLTLFPEMFPGPLGLSLAGRALVAGLWALDVRDIRCSAADRHRSVDDTPAGGGPGMVLRADVLAKAIDAAEFSPDRPRLLMSPRGRPLTQSQIVELSAGPGPLIVCARFEGVDQRVIEARGLAEVSIGDYVLSGGEIPAMALIDACVRLLPGVMGKAESGADESFSHGLLEYPQYTRPQQFEGRPIPDILLSGDHAKVAAWRRAEAEALTKARRPDLWTAWAGQNPPKSNTDG.

132–137 serves as a coordination point for S-adenosyl-L-methionine; sequence IGDYVL.

This sequence belongs to the RNA methyltransferase TrmD family. In terms of assembly, homodimer.

It is found in the cytoplasm. The catalysed reaction is guanosine(37) in tRNA + S-adenosyl-L-methionine = N(1)-methylguanosine(37) in tRNA + S-adenosyl-L-homocysteine + H(+). Functionally, specifically methylates guanosine-37 in various tRNAs. In Nitrobacter hamburgensis (strain DSM 10229 / NCIMB 13809 / X14), this protein is tRNA (guanine-N(1)-)-methyltransferase.